Here is a 29-residue protein sequence, read N- to C-terminus: Cytochrome b6-f complex subunit 8 (29 aa).

Residues 3-23 (IVSLAWAGLMVVFTFSLSLVV) traverse the membrane as a helical segment.

Belongs to the PetN family. As to quaternary structure, the 4 large subunits of the cytochrome b6-f complex are cytochrome b6, subunit IV (17 kDa polypeptide, PetD), cytochrome f and the Rieske protein, while the 4 small subunits are PetG, PetL, PetM and PetN. The complex functions as a dimer.

The protein localises to the plastid. It is found in the chloroplast thylakoid membrane. Functionally, component of the cytochrome b6-f complex, which mediates electron transfer between photosystem II (PSII) and photosystem I (PSI), cyclic electron flow around PSI, and state transitions. The sequence is that of Cytochrome b6-f complex subunit 8 from Arabis hirsuta (Hairy rock-cress).